Reading from the N-terminus, the 258-residue chain is Na(+)-translocating NADH-quinone reductase subunit C (258 aa).

The chain crosses the membrane as a helical span at residues 14-34; that stretch reads LIVVLAVSLICSVIVAGAVVG. FMN phosphoryl serine is present on Ser226.

It belongs to the NqrC family. Composed of six subunits; NqrA, NqrB, NqrC, NqrD, NqrE and NqrF. FMN serves as cofactor.

It localises to the cell inner membrane. It catalyses the reaction a ubiquinone + n Na(+)(in) + NADH + H(+) = a ubiquinol + n Na(+)(out) + NAD(+). Its function is as follows. NQR complex catalyzes the reduction of ubiquinone-1 to ubiquinol by two successive reactions, coupled with the transport of Na(+) ions from the cytoplasm to the periplasm. NqrA to NqrE are probably involved in the second step, the conversion of ubisemiquinone to ubiquinol. The sequence is that of Na(+)-translocating NADH-quinone reductase subunit C from Neisseria meningitidis serogroup B (strain ATCC BAA-335 / MC58).